Reading from the N-terminus, the 257-residue chain is NAD-capped RNA hydrolase NudC (257 aa).

Residue R69 coordinates substrate. 2 residues coordinate Zn(2+): C98 and C101. E111 serves as a coordination point for substrate. Zn(2+) is bound by residues C116 and C119. Y124 is a binding site for substrate. The Nudix hydrolase domain occupies 125 to 248 (PQIAPCIIVA…TVARRLIEDT (124 aa)). A divalent metal cation-binding residues include A158, E174, and E178. A Nudix box motif is present at residues 159-180 (GFVEVGETLEQAVAREVMEESG). Position 192-199 (192-199 (QPWPFPQS)) interacts with substrate. E219 contributes to the a divalent metal cation binding site. A241 lines the substrate pocket.

This sequence belongs to the Nudix hydrolase family. NudC subfamily. As to quaternary structure, homodimer. The cofactor is Mg(2+). Requires Mn(2+) as cofactor. It depends on Zn(2+) as a cofactor.

It carries out the reaction a 5'-end NAD(+)-phospho-ribonucleoside in mRNA + H2O = a 5'-end phospho-adenosine-phospho-ribonucleoside in mRNA + beta-nicotinamide D-ribonucleotide + 2 H(+). It catalyses the reaction NAD(+) + H2O = beta-nicotinamide D-ribonucleotide + AMP + 2 H(+). The catalysed reaction is NADH + H2O = reduced beta-nicotinamide D-ribonucleotide + AMP + 2 H(+). MRNA decapping enzyme that specifically removes the nicotinamide adenine dinucleotide (NAD) cap from a subset of mRNAs by hydrolyzing the diphosphate linkage to produce nicotinamide mononucleotide (NMN) and 5' monophosphate mRNA. The NAD-cap is present at the 5'-end of some mRNAs and stabilizes RNA against 5'-processing. Has preference for mRNAs with a 5'-end purine. Catalyzes the hydrolysis of a broad range of dinucleotide pyrophosphates. The protein is NAD-capped RNA hydrolase NudC of Salmonella typhi.